A 199-amino-acid polypeptide reads, in one-letter code: Chaperone protein TorD (199 aa).

The protein belongs to the TorD/DmsD family. TorD subfamily.

The protein resides in the cytoplasm. Functionally, involved in the biogenesis of TorA. Acts on TorA before the insertion of the molybdenum cofactor and, as a result, probably favors a conformation of the apoenzyme that is competent for acquiring the cofactor. This is Chaperone protein TorD from Escherichia coli O157:H7 (strain EC4115 / EHEC).